A 29-amino-acid polypeptide reads, in one-letter code: NEGKAKCGNTAGSKLTFKSADECTKTGQK.

Its subcellular location is the secreted. The protein localises to the nematocyst. It localises to the target cell membrane. In terms of biological role, cytolysin that shows moderate hemolysis and moderate myonecrosis. This Olindias sambaquiensis (Hydromedusa) protein is Cytolysin Oshem 1.